The sequence spans 148 residues: Large ribosomal subunit protein uL15 (148 aa).

Residues methionine 1–glycine 30 show a composition bias toward basic residues. The disordered stretch occupies residues methionine 1–glycine 37. A (3S)-3-hydroxyhistidine modification is found at histidine 39. Lysine 47 and lysine 55 each carry N6-acetyllysine. Serine 68 is subject to Phosphoserine. An N6-acetyllysine modification is found at lysine 110.

The protein belongs to the universal ribosomal protein uL15 family. In terms of assembly, component of the large ribosomal subunit. Post-translationally, hydroxylated on His-39 by MINA.

It localises to the cytoplasm. Functionally, component of the large ribosomal subunit. The ribosome is a large ribonucleoprotein complex responsible for the synthesis of proteins in the cell. This is Large ribosomal subunit protein uL15 (Rpl27a) from Rattus norvegicus (Rat).